Here is a 178-residue protein sequence, read N- to C-terminus: Cytochrome b6-f complex iron-sulfur subunit (178 aa).

The helical transmembrane segment at 20 to 42 threads the bilayer; it reads LLTFGTATGVALGALYPVANYFM. Residues 65–161 enclose the Rieske domain; the sequence is KTGWLATHQA…VDIEDDAVLV (97 aa). 4 residues coordinate [2Fe-2S] cluster: cysteine 107, histidine 109, cysteine 125, and histidine 128. Cysteine 112 and cysteine 127 form a disulfide bridge.

This sequence belongs to the Rieske iron-sulfur protein family. As to quaternary structure, the 4 large subunits of the cytochrome b6-f complex are cytochrome b6, subunit IV (17 kDa polypeptide, PetD), cytochrome f and the Rieske protein, while the 4 small subunits are PetG, PetL, PetM and PetN. The complex functions as a dimer. It depends on [2Fe-2S] cluster as a cofactor.

The protein resides in the cellular thylakoid membrane. The enzyme catalyses 2 oxidized [plastocyanin] + a plastoquinol + 2 H(+)(in) = 2 reduced [plastocyanin] + a plastoquinone + 4 H(+)(out). Functionally, component of the cytochrome b6-f complex, which mediates electron transfer between photosystem II (PSII) and photosystem I (PSI), cyclic electron flow around PSI, and state transitions. The protein is Cytochrome b6-f complex iron-sulfur subunit of Prochlorococcus marinus (strain MIT 9215).